The chain runs to 206 residues: CASP-like protein 1F1 (206 aa).

The Cytoplasmic portion of the chain corresponds to 1–43 (MCFQFSILYTCYLAHFGVFPRKYLVMAGIEAKFQQNPPLGTHK). Residues 44 to 64 (LFLGAHICLRILTVTATLTAA) traverse the membrane as a helical segment. Topologically, residues 65 to 92 (WMMITSKQTVEVYGIQVEAKYSYSSAFK) are extracellular. The chain crosses the membrane as a helical span at residues 93 to 113 (FFSYANAIACGCSVLTLFPAF). The Cytoplasmic segment spans residues 114–124 (SLFYRGSTPMK). A helical membrane pass occupies residues 125-145 (FFFLFLHDLCMMSLVLAGCAA). Residues 146 to 177 (ATAIGYVGRYGNNHAGWMAICDQFDEYCNRIR) lie on the Extracellular side of the membrane. The chain crosses the membrane as a helical span at residues 178 to 198 (LSLMFSYLAFVFILMLTIMSA). Residues 199 to 206 (NKSREIRV) are Cytoplasmic-facing.

Belongs to the Casparian strip membrane proteins (CASP) family. In terms of assembly, homodimer and heterodimers.

It is found in the cell membrane. This is CASP-like protein 1F1 from Vitis vinifera (Grape).